A 201-amino-acid polypeptide reads, in one-letter code: Syndecan-2 (201 aa).

Positions 1–18 (MQRAWILLTLGLMACVSA) are cleaved as a signal peptide. At 19-144 (ETRAELTSDK…HSDNLFKRTE (126 aa)) the chain is on the extracellular side. Residues Ser-41, Ser-55, and Ser-57 are each glycosylated (O-linked (Xyl...) (glycosaminoglycan) serine). Disordered regions lie at residues 42-69 (GLYP…PDLT) and 88-129 (TMTL…KSTD). A compositionally biased stretch (polar residues) spans 90–102 (TLKTQSITPTQTE). Residues 106–123 (ETDKKEFEISEAEEKQDP) show a composition bias toward basic and acidic residues. Ser-115 is modified (phosphoserine). The chain crosses the membrane as a helical span at residues 145 to 169 (VLAAVIAGGVIGFLFAIFLILLLVY). The Cytoplasmic segment spans residues 170 to 201 (RMRKKDEGSYDLGERKPSSAAYQKAPTKEFYA). The segment at 178–201 (SYDLGERKPSSAAYQKAPTKEFYA) is disordered. Phosphoserine is present on Ser-187.

The protein belongs to the syndecan proteoglycan family. As to quaternary structure, interacts (via cytoplasmic domain) with SARM1. Forms a complex with SDCBP and PDCD6IP. Post-translationally, O-glycosylated; contains both heparan sulfate and chondroitin sulfate.

The protein localises to the membrane. Its function is as follows. Cell surface proteoglycan which regulates dendritic arbor morphogenesis. The polypeptide is Syndecan-2 (Sdc2) (Rattus norvegicus (Rat)).